The following is an 81-amino-acid chain: Small ribosomal subunit protein uS17 (81 aa).

The protein belongs to the universal ribosomal protein uS17 family. In terms of assembly, part of the 30S ribosomal subunit.

In terms of biological role, one of the primary rRNA binding proteins, it binds specifically to the 5'-end of 16S ribosomal RNA. This chain is Small ribosomal subunit protein uS17, found in Methylocella silvestris (strain DSM 15510 / CIP 108128 / LMG 27833 / NCIMB 13906 / BL2).